Reading from the N-terminus, the 620-residue chain is Probable potassium transport system protein Kup (620 aa).

12 helical membrane-spanning segments follow: residues 7 to 27 (LALA…LYAI), 44 to 64 (VFGV…LKYL), 98 to 118 (FFLI…GMIT), 135 to 155 (PAFH…LFLF), 166 to 186 (LFGP…LVEI), 201 to 221 (GIMF…AVFL), 245 to 265 (WAFL…ALLL), 278 to 298 (LVPS…TIIA), 335 to 355 (IYVP…VIGF), 361 to 381 (LAAA…ILFY), 394 to 414 (VLNV…GASA), and 417 to 437 (LFHG…VMMT).

The protein belongs to the HAK/KUP transporter (TC 2.A.72) family.

It localises to the cell inner membrane. The catalysed reaction is K(+)(in) + H(+)(in) = K(+)(out) + H(+)(out). Functionally, transport of potassium into the cell. Likely operates as a K(+):H(+) symporter. In Chlorobium chlorochromatii (strain CaD3), this protein is Probable potassium transport system protein Kup.